Reading from the N-terminus, the 118-residue chain is UPF0231 protein PM0457 (118 aa).

This sequence belongs to the UPF0231 family.

This is UPF0231 protein PM0457 from Pasteurella multocida (strain Pm70).